Here is a 453-residue protein sequence, read N- to C-terminus: MFKPELLSPAGTLKNMRYAFAYGADAVYAGQPRYSLRVRNNEFNHENLQLGINEAHALGKKFYVVVNIAPHNAKLKTFIRDLKPVVEMGPDALIMSDPGLIMLVREHFPEMPIHLSVQANAVNWATVKFWQQMGLTRVILSRELSLEEIEEIRNQVPDMEIEIFVHGALCMAYSGRCLLSGYINKRDPNQGTCTNACRWEYNVQEGKEDDVGNIVHKYEPIPVQNVEPTLGIGAPTDKVFMIEEAQRPGEYMTAFEDEHGTYIMNSKDLRAIAHVERLTKMGVHSLKIEGRTKSFYYCARTAQVYRKAIDDAAAGKPFDTSLLETLEGLAHRGYTEGFLRRHTHDDYQNYEYGYSVSDRQQFVGEFTGERKGDLAAVAVKNKFSVGDSLELMTPQGNINFTLEHMENAKGEAMPIAPGDGYTVWLPVPQDLELNYALLMRNFSGETTRNPHGK.

The protein belongs to the peptidase U32 family.

In terms of biological role, involved in prephenate-dependent formation of 5-hydroxyuridine (ho5U) modification at position 34 in tRNAs, the first step in 5-carboxymethoxyuridine (cmo5U) biosynthesis. Involved differently in ho5U formation in each tRNA; tRNA(Leu3) and tRNA(Pro3) are major targets of TrhP. In Escherichia coli (strain K12), this protein is tRNA hydroxylation protein P.